Consider the following 275-residue polypeptide: Putative phosphoenolpyruvate synthase regulatory protein (275 aa).

157 to 164 (GVSRCGKT) contacts ADP.

Belongs to the pyruvate, phosphate/water dikinase regulatory protein family. PSRP subfamily.

It catalyses the reaction [pyruvate, water dikinase] + ADP = [pyruvate, water dikinase]-phosphate + AMP + H(+). The catalysed reaction is [pyruvate, water dikinase]-phosphate + phosphate + H(+) = [pyruvate, water dikinase] + diphosphate. Functionally, bifunctional serine/threonine kinase and phosphorylase involved in the regulation of the phosphoenolpyruvate synthase (PEPS) by catalyzing its phosphorylation/dephosphorylation. This chain is Putative phosphoenolpyruvate synthase regulatory protein, found in Bordetella pertussis (strain Tohama I / ATCC BAA-589 / NCTC 13251).